Reading from the N-terminus, the 554-residue chain is Solute carrier family 22 member 2 (554 aa).

Over 1–21 the chain is Cytoplasmic; that stretch reads MPTVDDILEQVGHFHFFQKQT. A helical transmembrane segment spans residues 22–42; sequence FFLLALISAAFTPIYVGIVFL. At 43-149 the chain is on the extracellular side; that stretch reads GFTPDHRCRS…LVCARSWMLD (107 aa). An N-linked (GlcNAc...) asparagine glycan is attached at N71. Residues 150–170 form a helical membrane-spanning segment; sequence LFQSAVNIGFFIGSVGIGYLA. The Cytoplasmic segment spans residues 171 to 176; sequence DRFGRK. Residues 177–197 traverse the membrane as a helical segment; that stretch reads LCLLVTILINAAAGVLMAVSP. A glycan (N-linked (GlcNAc...) asparagine) is linked at N198. Topologically, residues 198-209 are extracellular; sequence NYTWMLIFRLIQ. Residues 210 to 230 form a helical membrane-spanning segment; the sequence is GLVSKAGWLIGYILITEFVGL. The Cytoplasmic portion of the chain corresponds to 231–237; that stretch reads NYRRTVG. The helical transmembrane segment at 238-258 threads the bilayer; the sequence is ILYQVAFTVGLLVLAGVAYAL. The Extracellular segment spans residues 259-262; the sequence is PRWR. A helical membrane pass occupies residues 263-283; that stretch reads WLQLTVTLPYFCFLLYYWCIP. A Proline-rich sequence motif is present at residues 283–287; it reads PESPR. Residues 284 to 348 lie on the Cytoplasmic side of the membrane; it reads ESPRWLISQN…RTPQIRKHTC (65 aa). The helical transmembrane segment at 349-369 threads the bilayer; the sequence is ILMYNWFTSSVLYQGLIMHLG. Topologically, residues 370–374 are extracellular; it reads LAGGD. A helical transmembrane segment spans residues 375-395; sequence IYLDFFYSALVEFPAAFLIIA. Residues 396-403 lie on the Cytoplasmic side of the membrane; the sequence is TIDRVGRR. A helical membrane pass occupies residues 404–424; that stretch reads YPWAVSNMVAGAACLASVFVP. Over 425 to 427 the chain is Extracellular; sequence DDL. A helical membrane pass occupies residues 428-450; the sequence is QGLRITVACLGRMGITMAYEMVC. Over 451–463 the chain is Cytoplasmic; sequence LVNAELYPTFIRN. The chain crosses the membrane as a helical span at residues 464–484; that stretch reads LGVLVCSSLCDVGGIVTPFLV. The Extracellular portion of the chain corresponds to 485–493; sequence YRLTAIWLQ. The chain crosses the membrane as a helical span at residues 494–514; that stretch reads LPLVVFAVVGLVAGGLVLMLP. Residues 515–554 lie on the Cytoplasmic side of the membrane; it reads ETKGRTLPETIEEAENLQRPRKNREKVIYVHVRKADGPLT.

The protein belongs to the major facilitator (TC 2.A.1) superfamily. Organic cation transporter (TC 2.A.1.19) family. Tyrosine phosphorylated. As to expression, expressed in kidney.

It localises to the basolateral cell membrane. It is found in the basal cell membrane. It catalyses the reaction (R)-noradrenaline(out) = (R)-noradrenaline(in). It carries out the reaction (R)-adrenaline(out) = (R)-adrenaline(in). The enzyme catalyses serotonin(out) = serotonin(in). The catalysed reaction is dopamine(out) = dopamine(in). It catalyses the reaction histamine(out) = histamine(in). It carries out the reaction thiamine(in) = thiamine(out). The enzyme catalyses creatinine(in) = creatinine(out). The catalysed reaction is 1-methylnicotinamide(out) = 1-methylnicotinamide(in). It catalyses the reaction guanidine(out) = guanidine(in). It carries out the reaction choline(out) = choline(in). The enzyme catalyses agmatine(out) = agmatine(in). The catalysed reaction is putrescine(out) = putrescine(in). It catalyses the reaction spermidine(in) = spermidine(out). It carries out the reaction tyramine(in) = tyramine(out). The enzyme catalyses L-histidyl-L-proline diketopiperazine(in) = L-histidyl-L-proline diketopiperazine(out). The catalysed reaction is (R)-salsolinol(in) = (R)-salsolinol(out). It catalyses the reaction N-methyl-(R)-salsolinol(in) = N-methyl-(R)-salsolinol(out). It carries out the reaction acetylcholine(in) = acetylcholine(out). The enzyme catalyses prostaglandin F2alpha(out) = prostaglandin F2alpha(in). The catalysed reaction is prostaglandin E2(out) = prostaglandin E2(in). Its activity is regulated as follows. Tyrosine phosphorylation of the transporter leads to activation of the transport activity. Inhibited by cGMP, most likely through a cGMP-binding protein that interacts with OCT2. Electrogenic voltage-dependent transporter that mediates the transport of a variety of organic cations such as endogenous bioactive amines, cationic drugs and xenobiotics. Functions as a Na(+)-independent, bidirectional uniporter. Cation cellular uptake or release is driven by the electrochemical potential, i.e. membrane potential and concentration gradient. However, may also engage electroneutral cation exchange when saturating concentrations of cation substrates are reached. Predominantly expressed at the basolateral membrane of hepatocytes and proximal tubules and involved in the uptake and disposition of cationic compounds by hepatic and renal clearance from the blood flow. Implicated in monoamine neurotransmitters uptake such as histamine, dopamine, adrenaline/epinephrine, noradrenaline/norepinephrine, serotonin and tyramine, thereby supporting a physiological role in the central nervous system by regulating interstitial concentrations of neurotransmitters. Also capable of transporting dopaminergic neuromodulators cyclo(his-pro), salsolinol and N-methyl-salsolinol, thereby involved in the maintenance of dopaminergic cell integrity in the central nervous system. Mediates the bidirectional transport of acetylcholine (ACh) at the apical membrane of ciliated cell in airway epithelium, thereby playing a role in luminal release of ACh from bronchial epithelium. Also transports guanidine and endogenous monoamines such as vitamin B1/thiamine, creatinine and N-1-methylnicotinamide (NMN). Mediates the uptake and efflux of quaternary ammonium compound choline. Mediates the bidirectional transport of polyamine agmatine and the uptake of polyamines putrescine and spermidine. Able to transport non-amine endogenous compounds such as prostaglandin E2 (PGE2) and prostaglandin F2-alpha (PGF2-alpha). Also involved in the uptake of xenobiotic 4-(4-(dimethylamino)styryl)-N-methylpyridinium (ASP). May contribute to regulate the transport of organic compounds in testis across the blood-testis-barrier. In Oryctolagus cuniculus (Rabbit), this protein is Solute carrier family 22 member 2 (SLC22A2).